A 91-amino-acid chain; its full sequence is Small membrane A-kinase anchor protein (91 aa).

G2 carries the N-myristoyl glycine lipid modification.

This sequence belongs to the small membrane AKAP family. In terms of processing, may be palmitoylated at Cys-3.

It localises to the cell membrane. Its function is as follows. Binds to type I regulatory subunits of protein kinase A and may anchor/target them to the plasma membrane. The sequence is that of Small membrane A-kinase anchor protein from Xenopus tropicalis (Western clawed frog).